The primary structure comprises 163 residues: uncharacterized protein (163 aa).

Positions 7–162 (ISISAVKLPQ…NVVYMRLEMS (156 aa)) constitute an N-acetyltransferase domain.

Belongs to the acetyltransferase family.

The protein localises to the cytoplasm. The protein resides in the nucleus. This is an uncharacterized protein from Schizosaccharomyces pombe (strain 972 / ATCC 24843) (Fission yeast).